The sequence spans 461 residues: Cysteine--tRNA ligase (461 aa).

Cysteine 28 provides a ligand contact to Zn(2+). The 'HIGH' region signature appears at 30–40 (ITVYDLCHIGH). Residues cysteine 209, histidine 234, and glutamate 238 each coordinate Zn(2+). The 'KMSKS' region motif lies at 266 to 270 (KMSKS). Position 269 (lysine 269) interacts with ATP.

Belongs to the class-I aminoacyl-tRNA synthetase family. As to quaternary structure, monomer. Zn(2+) is required as a cofactor.

It localises to the cytoplasm. The enzyme catalyses tRNA(Cys) + L-cysteine + ATP = L-cysteinyl-tRNA(Cys) + AMP + diphosphate. In Shigella boydii serotype 18 (strain CDC 3083-94 / BS512), this protein is Cysteine--tRNA ligase.